We begin with the raw amino-acid sequence, 689 residues long: DNA ligase (689 aa).

Residues 40-44 (DAEYD), 89-90 (SL), and glutamate 121 each bind NAD(+). Catalysis depends on lysine 123, which acts as the N6-AMP-lysine intermediate. NAD(+)-binding residues include arginine 144, glutamate 179, lysine 295, and lysine 319. Zn(2+) is bound by residues cysteine 413, cysteine 416, cysteine 431, and cysteine 437. In terms of domain architecture, BRCT spans 610–689 (KEHSSLTGKI…EEWLTIVNNV (80 aa)).

It belongs to the NAD-dependent DNA ligase family. LigA subfamily. Requires Mg(2+) as cofactor. The cofactor is Mn(2+).

The catalysed reaction is NAD(+) + (deoxyribonucleotide)n-3'-hydroxyl + 5'-phospho-(deoxyribonucleotide)m = (deoxyribonucleotide)n+m + AMP + beta-nicotinamide D-nucleotide.. In terms of biological role, DNA ligase that catalyzes the formation of phosphodiester linkages between 5'-phosphoryl and 3'-hydroxyl groups in double-stranded DNA using NAD as a coenzyme and as the energy source for the reaction. It is essential for DNA replication and repair of damaged DNA. The protein is DNA ligase of Rickettsia canadensis (strain McKiel).